A 557-amino-acid polypeptide reads, in one-letter code: MFKSDIEIAQESKMKNIKNIAEKIGLTEEDIDLYGKYKCKISLDVLKSNKDKKDGKLILVTAINPTPAGEGKSTVTVGLGQALWKKNKKAVIALREPSLGPVFGIKGGAAGGGYSQVVPMEDINLHFTGDMHAITSANNLLAAAIDNHIHQGNILKIDQRRILFKRVMDINDRALRNVIVALGGKINGFPREDGFMITVASEIMAILCLAEDLMNLKNKMGEILVAYSTEGKPIYCKDLEVQGAMALLMKDAIKPNLVQTLENTPAIIHGGPFANIAHGCNSILGTKMALKLGDYVITEAGFGADLGAEKFFDIKCRKANLKPNCVVIVATVRALKYNGGIPKENLKEQNMEALSKGIKNLGKHIENVNKFGVPAVVAINKFISDTEEEIEFIKKYCKELGAEVSIAEVWEKGGNGGLELADKVLDTIENKESKFNPIYEETLNIKQKIETIAQEIYGAEGVDYSKEAEKQISEIEKLDLDKKPVCMAKTQYSLSDDARLLGRPCGFRINVKEVRISNGAGFIVVLTGNVMTMPGLPKKPAANNMNVLSDGNIVGLF.

An ATP-binding site is contributed by Thr-66–Ser-73.

This sequence belongs to the formate--tetrahydrofolate ligase family.

It carries out the reaction (6S)-5,6,7,8-tetrahydrofolate + formate + ATP = (6R)-10-formyltetrahydrofolate + ADP + phosphate. It functions in the pathway one-carbon metabolism; tetrahydrofolate interconversion. This chain is Formate--tetrahydrofolate ligase, found in Clostridium botulinum (strain Kyoto / Type A2).